Consider the following 89-residue polypeptide: Small ribosomal subunit protein uS15 (89 aa).

Residues 1 to 11 (MSITAERKAEV) are compositionally biased toward basic and acidic residues. A disordered region spans residues 1 to 25 (MSITAERKAEVIKTNARKSGDTGSP).

It belongs to the universal ribosomal protein uS15 family. In terms of assembly, part of the 30S ribosomal subunit. Forms a bridge to the 50S subunit in the 70S ribosome, contacting the 23S rRNA.

In terms of biological role, one of the primary rRNA binding proteins, it binds directly to 16S rRNA where it helps nucleate assembly of the platform of the 30S subunit by binding and bridging several RNA helices of the 16S rRNA. Functionally, forms an intersubunit bridge (bridge B4) with the 23S rRNA of the 50S subunit in the ribosome. The polypeptide is Small ribosomal subunit protein uS15 (Nitrobacter hamburgensis (strain DSM 10229 / NCIMB 13809 / X14)).